A 427-amino-acid chain; its full sequence is MEVRRGDGSVFRGVLMPKHETSHPDTVVIKLGNGYNIGVLVGEGDDIVVKGSLRPGTPGALVPLLEEPLQPAEERVYIIGAGGTIASRVDYETGAVKPYLDASELATTIPELQRYASIEAEQLFSILSEDMKPSMWEAIVDRAARVLEAGYDGVVVAHGTDTMAFTASALSFAFHKGLPSPVILTGSQRSSDRPSSDAAFNLTASVLAASRAPFAEVAVVMHGETGDTYALAHRGVRVKKMHSSRRDAFQSVNDKPLARIYPFEGRVEMLRDDYRRRGESGLEVDNGFEERVALVKHFPGLISEVIDALLDRGFKGIVVEGTGFGHVSSDAIKSIERARDQGVPIVITTQTVFGRVNLNVYSTGRKMLAAGAIPAGDMTSEAAYAKLSWILARTRELEVVRKMFQRNLAGEVSERHILRLYRHIGGV.

The region spanning E74–N407 is the Asparaginase/glutaminase domain. Active-site residues include T84, T160, D161, and K240.

It belongs to the asparaginase 1 family. GatD subfamily. Heterodimer of GatD and GatE.

The enzyme catalyses L-glutamyl-tRNA(Gln) + L-glutamine + ATP + H2O = L-glutaminyl-tRNA(Gln) + L-glutamate + ADP + phosphate + H(+). Allows the formation of correctly charged Gln-tRNA(Gln) through the transamidation of misacylated Glu-tRNA(Gln) in organisms which lack glutaminyl-tRNA synthetase. The reaction takes place in the presence of glutamine and ATP through an activated gamma-phospho-Glu-tRNA(Gln). The GatDE system is specific for glutamate and does not act on aspartate. The sequence is that of Glutamyl-tRNA(Gln) amidotransferase subunit D from Aeropyrum pernix (strain ATCC 700893 / DSM 11879 / JCM 9820 / NBRC 100138 / K1).